The sequence spans 576 residues: Proline--tRNA ligase (576 aa).

Belongs to the class-II aminoacyl-tRNA synthetase family. ProS type 1 subfamily. Homodimer.

It localises to the cytoplasm. The enzyme catalyses tRNA(Pro) + L-proline + ATP = L-prolyl-tRNA(Pro) + AMP + diphosphate. Its function is as follows. Catalyzes the attachment of proline to tRNA(Pro) in a two-step reaction: proline is first activated by ATP to form Pro-AMP and then transferred to the acceptor end of tRNA(Pro). As ProRS can inadvertently accommodate and process non-cognate amino acids such as alanine and cysteine, to avoid such errors it has two additional distinct editing activities against alanine. One activity is designated as 'pretransfer' editing and involves the tRNA(Pro)-independent hydrolysis of activated Ala-AMP. The other activity is designated 'posttransfer' editing and involves deacylation of mischarged Ala-tRNA(Pro). The misacylated Cys-tRNA(Pro) is not edited by ProRS. The chain is Proline--tRNA ligase from Bordetella parapertussis (strain 12822 / ATCC BAA-587 / NCTC 13253).